Here is a 109-residue protein sequence, read N- to C-terminus: RNA-binding protein Hfq (109 aa).

A Sm domain is found at 9 to 68 (DPFLNALRKEKVSVSVYLVNGIKLQGQVEAFDQFCIVLRNTVNQMVYKHAISTIVPAKSV). The disordered stretch occupies residues 77–109 (PYHQNSNDEQDENVDDIHSDDLEIQENEGNIHE).

Belongs to the Hfq family. In terms of assembly, homohexamer.

Functionally, RNA chaperone that binds small regulatory RNA (sRNAs) and mRNAs to facilitate mRNA translational regulation in response to envelope stress, environmental stress and changes in metabolite concentrations. Also binds with high specificity to tRNAs. This Francisella tularensis subsp. holarctica (strain FTNF002-00 / FTA) protein is RNA-binding protein Hfq.